Consider the following 507-residue polypeptide: Aldehyde dehydrogenase 1, mitochondrial (507 aa).

The N-terminal 21 residues, 1 to 21 (MLATRNLVPIIRASIKWRIKL), are a transit peptide targeting the mitochondrion. Residue 266–271 (GSTLVG) coordinates NAD(+). Catalysis depends on residues glutamate 289 and cysteine 323.

This sequence belongs to the aldehyde dehydrogenase family. Homotetramer.

The protein localises to the mitochondrion matrix. It carries out the reaction an aldehyde + NAD(+) + H2O = a carboxylate + NADH + 2 H(+). The protein operates within alcohol metabolism; ethanol degradation; acetate from ethanol: step 2/2. This Saccharomyces cerevisiae (Baker's yeast) protein is Aldehyde dehydrogenase 1, mitochondrial (ALD1).